A 383-amino-acid chain; its full sequence is Serpin B5 (383 aa).

N-linked (GlcNAc...) asparagine glycans are attached at residues asparagine 106, asparagine 133, asparagine 176, and asparagine 361.

Belongs to the serpin family. Ov-serpin subfamily.

The protein localises to the secreted. Its subcellular location is the extracellular space. In terms of biological role, may not exhibit serine protease inhibitory activity. The protein is Serpin B5 (serpinb5) of Xenopus laevis (African clawed frog).